Here is a 519-residue protein sequence, read N- to C-terminus: Cytosol aminopeptidase (519 aa).

A Phosphoserine modification is found at S42. K45 is subject to N6-succinyllysine. A Phosphoserine modification is found at S54. 2 positions are modified to N6-succinyllysine: K61 and K103. 2 positions are modified to phosphoserine: S180 and S194. Zn(2+) is bound by residues L202, M203, and T205. N6-acetyllysine; alternate is present on K221. An N6-succinyllysine; alternate modification is found at K221. S238 carries the post-translational modification Phosphoserine. Residues K282 and D287 each coordinate Zn(2+). Substrate is bound by residues K282, D287, S292, and K294. D287 contributes to the Mg(2+) binding site. Residue K294 is part of the active site. Zn(2+) contacts are provided by R303, D305, D364, and E366. D305 and D364 together coordinate substrate. Mg(2+) contacts are provided by D364 and E366. The active site involves R368. K455 bears the N6-acetyllysine; alternate mark. K455 is subject to N6-succinyllysine; alternate. Residue K476 is modified to N6-succinyllysine. At K489 the chain carries N6-acetyllysine; alternate. K489 bears the N6-succinyllysine; alternate mark.

It belongs to the peptidase M17 family. As to quaternary structure, homohexamer. The cofactor is Zn(2+). Mn(2+) serves as cofactor.

The protein resides in the cytoplasm. It catalyses the reaction Release of an N-terminal amino acid, Xaa-|-Yaa-, in which Xaa is preferably Leu, but may be other amino acids including Pro although not Arg or Lys, and Yaa may be Pro. Amino acid amides and methyl esters are also readily hydrolyzed, but rates on arylamides are exceedingly low.. The enzyme catalyses an S-substituted L-cysteinylglycine + H2O = an S-substituted L-cysteine + glycine. The catalysed reaction is L-cysteinylglycine + H2O = L-cysteine + glycine. It carries out the reaction S-benzyl-L-cysteinylglycine + H2O = S-benzyl-L-cysteine + glycine. It catalyses the reaction Release of N-terminal proline from a peptide.. Its function is as follows. Cytosolic metallopeptidase that catalyzes the removal of unsubstituted N-terminal hydrophobic amino acids from various peptides. The presence of Zn(2+) ions is essential for the peptidase activity, and the association with other cofactors can modulate the substrate spectificity of the enzyme. For instance, in the presence of Mn(2+), it displays a specific Cys-Gly hydrolyzing activity of Cys-Gly-S-conjugates. Involved in the metabolism of glutathione and in the degradation of glutathione S-conjugates, which may play a role in the control of the cell redox status. The protein is Cytosol aminopeptidase of Sus scrofa (Pig).